Reading from the N-terminus, the 306-residue chain is Pseudouridine-5'-phosphate glycosidase (306 aa).

Catalysis depends on E27, which acts as the Proton donor. Residues K88 and V108 each coordinate substrate. D140 serves as a coordination point for Mn(2+). 142–144 (SAD) is a substrate binding site. K161 serves as the catalytic Nucleophile.

It belongs to the pseudouridine-5'-phosphate glycosidase family. Homotrimer. Mn(2+) serves as cofactor.

The catalysed reaction is D-ribose 5-phosphate + uracil = psi-UMP + H2O. In terms of biological role, catalyzes the reversible cleavage of pseudouridine 5'-phosphate (PsiMP) to ribose 5-phosphate and uracil. Functions biologically in the cleavage direction, as part of a pseudouridine degradation pathway. In Petrotoga mobilis (strain DSM 10674 / SJ95), this protein is Pseudouridine-5'-phosphate glycosidase.